Reading from the N-terminus, the 91-residue chain is Insertion element IS1 1 protein InsA (91 aa).

It belongs to the IS1 elements InsA family.

Its function is as follows. Absolutely required for transposition of IS1. This is Insertion element IS1 1 protein InsA (insA1) from Escherichia coli (strain K12).